The primary structure comprises 469 residues: uncharacterized protein (469 aa).

Residues 11 to 65 are a coiled coil; sequence LFISVAFSQESVEDLKRLLEEYKKKIQEIERRLEELEKAKKEEEKKKEAVALKPT.

This is an uncharacterized protein from Aquifex aeolicus (strain VF5).